A 538-amino-acid polypeptide reads, in one-letter code: Putative cysteine ligase BshC (538 aa).

The stretch at 421 to 485 (VEEKFQEAKK…LERRHEVELN (65 aa)) forms a coiled coil.

This sequence belongs to the BshC family.

In terms of biological role, involved in bacillithiol (BSH) biosynthesis. May catalyze the last step of the pathway, the addition of cysteine to glucosamine malate (GlcN-Mal) to generate BSH. The polypeptide is Putative cysteine ligase BshC (Bacillus cytotoxicus (strain DSM 22905 / CIP 110041 / 391-98 / NVH 391-98)).